A 352-amino-acid polypeptide reads, in one-letter code: MITKSEALDFLKFNSINPILEKLEDINTRNSSKTITFSKNAFIPVCNWCRNVCGYCTFRAEDFKLLKMEEMKEILIKADVFGCREALFTFGENVDENEKVKEELKKMGYSGILEYLYEISAWCLENTNLLPHTNCGILSYDELKYLREVNASMGLMLENSSERLCSTIAHEKSPGKDPNLRIEMIENAGKLKIPFTTGILIGIGETLEERIDSIFEIKRIHEKYGNIQEVIVQNFRSKPKIPMENYKEPSPVEMFKMIILSKLILEDISIQVPPNLNRETGQLFLMAGIDDWGGVSPLTKDFVNPEAPWPDIEELNSFSKELGFNLKERLPVYEKYIAEEWLDKKILEKIKK.

The Radical SAM core domain occupies 35-275 (ITFSKNAFIP…EDISIQVPPN (241 aa)). Positions 49, 53, and 56 each coordinate [4Fe-4S] cluster.

Belongs to the radical SAM superfamily. CofG family. In terms of assembly, consists of two subunits, CofG and CofH. The cofactor is [4Fe-4S] cluster.

The enzyme catalyses 5-amino-5-(4-hydroxybenzyl)-6-(D-ribitylimino)-5,6-dihydrouracil + S-adenosyl-L-methionine = 7,8-didemethyl-8-hydroxy-5-deazariboflavin + 5'-deoxyadenosine + L-methionine + NH4(+) + H(+). Its pathway is cofactor biosynthesis; coenzyme F0 biosynthesis. Catalyzes the radical-mediated synthesis of 7,8-didemethyl-8-hydroxy-5-deazariboflavin from 5-amino-5-(4-hydroxybenzyl)-6-(D-ribitylimino)-5,6-dihydrouracil. This is 7,8-didemethyl-8-hydroxy-5-deazariboflavin synthase from Methanococcus maripaludis (strain C6 / ATCC BAA-1332).